A 207-amino-acid polypeptide reads, in one-letter code: Na(+)-translocating ferredoxin:NAD(+) oxidoreductase complex subunit G (207 aa).

A helical transmembrane segment spans residues 18 to 38 (GLILFVISAVAACALALTNYV). An FMN phosphoryl threonine modification is found at Thr185.

It belongs to the RnfG family. The complex is composed of six subunits: RnfA, RnfB, RnfC, RnfD, RnfE and RnfG. Requires FMN as cofactor.

The protein localises to the cell membrane. It carries out the reaction 2 reduced [2Fe-2S]-[ferredoxin] + Na(+)(in) + NAD(+) + H(+) = 2 oxidized [2Fe-2S]-[ferredoxin] + Na(+)(out) + NADH. Functionally, part of a membrane-bound complex that couples electron transfer with translocation of ions across the membrane. Couples electron transfer from reduced ferredoxin to NAD(+) with electrogenic movement of Na(+) out of the cell. Involved in caffeate respiration. The chain is Na(+)-translocating ferredoxin:NAD(+) oxidoreductase complex subunit G from Acetobacterium woodii (strain ATCC 29683 / DSM 1030 / JCM 2381 / KCTC 1655 / WB1).